The sequence spans 158 residues: SsrA-binding protein (158 aa).

This sequence belongs to the SmpB family.

The protein localises to the cytoplasm. Required for rescue of stalled ribosomes mediated by trans-translation. Binds to transfer-messenger RNA (tmRNA), required for stable association of tmRNA with ribosomes. tmRNA and SmpB together mimic tRNA shape, replacing the anticodon stem-loop with SmpB. tmRNA is encoded by the ssrA gene; the 2 termini fold to resemble tRNA(Ala) and it encodes a 'tag peptide', a short internal open reading frame. During trans-translation Ala-aminoacylated tmRNA acts like a tRNA, entering the A-site of stalled ribosomes, displacing the stalled mRNA. The ribosome then switches to translate the ORF on the tmRNA; the nascent peptide is terminated with the 'tag peptide' encoded by the tmRNA and targeted for degradation. The ribosome is freed to recommence translation, which seems to be the essential function of trans-translation. The protein is SsrA-binding protein of Buchnera aphidicola subsp. Baizongia pistaciae (strain Bp).